The sequence spans 109 residues: Globin (109 aa).

One can recognise a Globin domain in the interval 3–109; it reads PLTAAEVSSL…IFPIAGIHAL (107 aa).

The protein belongs to the globin family. Monomer.

Its function is as follows. Oxygen binding protein. The chain is Globin from Dicrocoelium dendriticum (Small liver fluke).